A 306-amino-acid chain; its full sequence is TnpB-like protein aq_aa05 (306 aa).

Zn(2+) is bound by residues Cys213, Cys216, Cys234, and Cys237.

The protein belongs to the transposase 35 family.

In Aquifex aeolicus (strain VF5), this protein is TnpB-like protein aq_aa05.